The following is a 513-amino-acid chain: Glucose-6-phosphate 1-dehydrogenase 2 (513 aa).

The residue at position 2 (A2) is an N-acetylalanine. At S8 the chain carries Phosphoserine. T10 bears the Phosphothreonine mark. Residues 38–45 (GASGDLAK) and R72 each bind NADP(+). K89 is subject to N6-acetyllysine. Positions 147 and 171 each coordinate NADP(+). D-glucose 6-phosphate-binding positions include K171, 201–205 (HYLDK), E239, and D258. Position 171 is an N6-(2-hydroxyisobutyryl)lysine; alternate (K171). K171 bears the N6-acetyllysine; alternate mark. H263 acts as the Proton acceptor in catalysis. An NADP(+)-binding site is contributed by R357. D-glucose 6-phosphate is bound by residues K360 and R365. K366, R370, and R393 together coordinate NADP(+). Q395 serves as a coordination point for D-glucose 6-phosphate. Residue 421–423 (DLT) participates in NADP(+) binding. An N6-acetyllysine modification is found at K432. The NADP(+) site is built by R487 and Y503. At Y503 the chain carries Phosphotyrosine.

The protein belongs to the glucose-6-phosphate dehydrogenase family. Homotetramer; dimer of dimers. Interacts with SIRT2; the interaction is enhanced by H(2)O(2) treatment. In terms of processing, acetylated by ELP3; acetylation inhibits its homodimerization and enzyme activity. Deacetylated by SIRT2; deacetylation stimulates its enzyme activity. Testis.

It localises to the cytoplasm. The protein localises to the cytosol. Its subcellular location is the membrane. It carries out the reaction D-glucose 6-phosphate + NADP(+) = 6-phospho-D-glucono-1,5-lactone + NADPH + H(+). The protein operates within carbohydrate degradation; pentose phosphate pathway; D-ribulose 5-phosphate from D-glucose 6-phosphate (oxidative stage): step 1/3. Its function is as follows. Catalyzes the rate-limiting step of the oxidative pentose-phosphate pathway, which represents a route for the dissimilation of carbohydrates besides glycolysis. The main function of this enzyme is to provide reducing power (NADPH) and pentose phosphates for fatty acid and nucleic acid synthesis. In Mus musculus (Mouse), this protein is Glucose-6-phosphate 1-dehydrogenase 2 (G6pd2).